The sequence spans 533 residues: D-3-phosphoglycerate dehydrogenase (533 aa).

Ala2 bears the N-acetylalanine mark. Ser14 carries the phosphoserine modification. Position 21 is an N6-acetyllysine; alternate (Lys21). Lys21 participates in a covalent cross-link: Glycyl lysine isopeptide (Lys-Gly) (interchain with G-Cter in SUMO1); alternate. Lys21 participates in a covalent cross-link: Glycyl lysine isopeptide (Lys-Gly) (interchain with G-Cter in SUMO2); alternate. Residue Lys58 is modified to N6-acetyllysine. NAD(+) contacts are provided by residues Thr78, 155 to 156, Asp175, Thr207, 234 to 236, and Asp260; these read RI and CAR. Thr78 bears the Phosphothreonine mark. Arg236 is an active-site residue. The active site involves Glu265. His283 serves as the catalytic Proton donor. Residue 283–286 participates in NAD(+) binding; the sequence is HLGA.

It belongs to the D-isomer specific 2-hydroxyacid dehydrogenase family. Homotetramer.

The enzyme catalyses (2R)-3-phosphoglycerate + NAD(+) = 3-phosphooxypyruvate + NADH + H(+). The catalysed reaction is (R)-2-hydroxyglutarate + NAD(+) = 2-oxoglutarate + NADH + H(+). It catalyses the reaction (S)-malate + NAD(+) = oxaloacetate + NADH + H(+). It participates in amino-acid biosynthesis; L-serine biosynthesis; L-serine from 3-phospho-D-glycerate: step 1/3. Catalyzes the reversible oxidation of 3-phospho-D-glycerate to 3-phosphonooxypyruvate, the first step of the phosphorylated L-serine biosynthesis pathway. Also catalyzes the reversible oxidation of 2-hydroxyglutarate to 2-oxoglutarate and the reversible oxidation of (S)-malate to oxaloacetate. This is D-3-phosphoglycerate dehydrogenase (PHGDH) from Pongo abelii (Sumatran orangutan).